The chain runs to 171 residues: Co-chaperone protein HscB (171 aa).

In terms of domain architecture, J spans 2–74 (DYFTLFGLPA…LARAEYLLSL (73 aa)).

Belongs to the HscB family. Interacts with HscA and stimulates its ATPase activity. Interacts with IscU.

Its function is as follows. Co-chaperone involved in the maturation of iron-sulfur cluster-containing proteins. Seems to help targeting proteins to be folded toward HscA. The polypeptide is Co-chaperone protein HscB (Enterobacter sp. (strain 638)).